We begin with the raw amino-acid sequence, 519 residues long: Threonine synthase, chloroplastic (519 aa).

The N-terminal 40 residues, 1-40, are a transit peptide targeting the chloroplast; it reads MAASCMLRSSFISPGLPQLHHQSTSKPNNGIHFFTPIKAT. Lys-196 bears the N6-(pyridoxal phosphate)lysine mark. Pyridoxal 5'-phosphate contacts are provided by residues 328-332 and Thr-465; that span reads GNLGN.

The protein belongs to the threonine synthase family. In terms of assembly, homodimer. The cofactor is pyridoxal 5'-phosphate.

The protein localises to the plastid. The protein resides in the chloroplast. The enzyme catalyses O-phospho-L-homoserine + H2O = L-threonine + phosphate. The protein operates within amino-acid biosynthesis; L-threonine biosynthesis; L-threonine from L-aspartate: step 5/5. Its activity is regulated as follows. Allosterically activated by S-adenosyl-methionine (SAM). Functionally, catalyzes the gamma-elimination of phosphate from L-phosphohomoserine and the beta-addition of water to produce L-threonine. The chain is Threonine synthase, chloroplastic from Solanum tuberosum (Potato).